We begin with the raw amino-acid sequence, 290 residues long: GTPase Era (290 aa).

Residues 2 to 168 (KVCIISILGR…IEILKEYAYN (167 aa)) form the Era-type G domain. The G1 stretch occupies residues 10–17 (GRPNVGKS). Residue 10 to 17 (GRPNVGKS) participates in GTP binding. The interval 36–40 (QTTRD) is G2. Residues 57 to 60 (DTPG) are G3. GTP contacts are provided by residues 57 to 61 (DTPGI) and 118 to 121 (SKID). The interval 118–121 (SKID) is G4. Positions 147–149 (VSN) are G5. Positions 199–275 (LTDELPHSIA…TLNLKVKVSN (77 aa)) constitute a KH type-2 domain.

This sequence belongs to the TRAFAC class TrmE-Era-EngA-EngB-Septin-like GTPase superfamily. Era GTPase family. In terms of assembly, monomer.

It localises to the cytoplasm. It is found in the cell membrane. In terms of biological role, an essential GTPase that binds both GDP and GTP, with rapid nucleotide exchange. Plays a role in 16S rRNA processing and 30S ribosomal subunit biogenesis and possibly also in cell cycle regulation and energy metabolism. The polypeptide is GTPase Era (Mycoplasmopsis agalactiae (strain NCTC 10123 / CIP 59.7 / PG2) (Mycoplasma agalactiae)).